Here is a 129-residue protein sequence, read N- to C-terminus: Ribulose bisphosphate carboxylase small subunit (129 aa).

Residues 104-120 show a composition bias toward basic and acidic residues; the sequence is ENEPSLRMTRTESDGRS. The tract at residues 104–129 is disordered; that stretch reads ENEPSLRMTRTESDGRSQHYTWETQR.

Belongs to the RuBisCO small chain family. In terms of assembly, heterohexadecamer of 8 large and 8 small subunits.

Functionally, ruBisCO catalyzes two reactions: the carboxylation of D-ribulose 1,5-bisphosphate, the primary event in carbon dioxide fixation, as well as the oxidative fragmentation of the pentose substrate. Both reactions occur simultaneously and in competition at the same active site. Although the small subunit is not catalytic it is essential for maximal activity. The chain is Ribulose bisphosphate carboxylase small subunit from Sinorhizobium medicae (strain WSM419) (Ensifer medicae).